A 279-amino-acid chain; its full sequence is Lacto-N-neotetraose biosynthesis glycosyltransferase LgtB (279 aa).

This sequence belongs to the glycosyltransferase 25 family.

It functions in the pathway glycan metabolism; lacto-N-neotetraose biosynthesis. It participates in bacterial outer membrane biogenesis; lipooligosaccharide biosynthesis. Functionally, adds the second galactose to the lacto-N-tetraose chain in lipooligosaccharide (LOS). This is Lacto-N-neotetraose biosynthesis glycosyltransferase LgtB (lgtB) from Neisseria gonorrhoeae.